The sequence spans 582 residues: Semenogelin-2 (582 aa).

A signal peptide spans 1–23 (MKSIILFVLSLLLILEKQAAVMG). 5 disordered regions span residues 25-62 (KGGS…SKGS), 131-156 (KGGQ…KGIF), 173-192 (KEQA…GSQS), 272-477 (NLNQ…EQRQ), and 502-554 (VEGK…SGAH). Basic and acidic residues predominate over residues 50–59 (GQKDKQHTES). Composition is skewed to polar residues over residues 137 to 151 (HGTQ…NSPS) and 174 to 192 (EQAS…GSQS). Residues 292–310 (RTEERQLNHGEKSVQKDVS) are compositionally biased toward basic and acidic residues. The segment covering 325–335 (KSQNQVTIPSQ) has biased composition (polar residues). Positions 336–345 (DQEHGHKENK) are enriched in basic and acidic residues. The segment covering 385–395 (KSQNQVTIPSQ) has biased composition (polar residues). The segment covering 396-405 (DQEHGHKENK) has biased composition (basic and acidic residues). Positions 445 to 455 (KSQNQVTIPSQ) are enriched in polar residues. Basic and acidic residues predominate over residues 456–465 (DQEHGHKENK). Composition is skewed to polar residues over residues 466-477 (ISYQSSSTEQRQ) and 506-529 (SQIQ…NSGK). The span at 537–546 (LLSHEQEGRY) shows a compositional bias: basic and acidic residues.

Belongs to the semenogelin family. Interacts with SERPINA5.

It localises to the secreted. In terms of biological role, participates in the formation of a gel matrix (sperm coagulum) entrapping the accessory gland secretions and ejaculated spermatozoa. The sequence is that of Semenogelin-2 (SEMG2) from Macaca nemestrina (Pig-tailed macaque).